The primary structure comprises 568 residues: Urease subunit alpha (568 aa).

One can recognise a Urease domain in the interval 130-568; sequence GGIDTHIHFI…LPMAQRYFLF (439 aa). The Ni(2+) site is built by histidine 135, histidine 137, and lysine 218. An N6-carboxylysine modification is found at lysine 218. Histidine 220 is a binding site for substrate. Ni(2+) contacts are provided by histidine 247 and histidine 273. Histidine 321 acts as the Proton donor in catalysis. Residue aspartate 361 coordinates Ni(2+).

This sequence belongs to the metallo-dependent hydrolases superfamily. Urease alpha subunit family. As to quaternary structure, heterotrimer of UreA (gamma), UreB (beta) and UreC (alpha) subunits. Three heterotrimers associate to form the active enzyme. The cofactor is Ni cation. Carboxylation allows a single lysine to coordinate two nickel ions.

The protein resides in the cytoplasm. It catalyses the reaction urea + 2 H2O + H(+) = hydrogencarbonate + 2 NH4(+). Its pathway is nitrogen metabolism; urea degradation; CO(2) and NH(3) from urea (urease route): step 1/1. The polypeptide is Urease subunit alpha (Burkholderia pseudomallei (strain 1106a)).